We begin with the raw amino-acid sequence, 462 residues long: Cathepsin F (462 aa).

A signal peptide spans 1–19 (MAPLLQLLWLLTLLSTVAL). Positions 20 to 248 (SPVPAKPWAD…MSPAKSINDL (229 aa)) are cleaved as a propeptide — activation peptide. N-linked (GlcNAc...) asparagine glycans are attached at residues N35, N138, and N173. 2 disulfides stabilise this stretch: C270/C311 and C304/C344. The active site involves C273. Residues N345 and N356 are each glycosylated (N-linked (GlcNAc...) asparagine). Cysteines 402 and 450 form a disulfide. Residue H409 is part of the active site. N418 is a glycosylation site (N-linked (GlcNAc...) asparagine). Residue N429 is part of the active site.

Belongs to the peptidase C1 family.

It localises to the lysosome. It catalyses the reaction The recombinant enzyme cleaves synthetic substrates with Phe and Leu (better than Val) in P2, with high specificity constant (kcat/Km) comparable to that of cathepsin L.. Its function is as follows. Thiol protease which is believed to participate in intracellular degradation and turnover of proteins. Has also been implicated in tumor invasion and metastasis. The sequence is that of Cathepsin F (Ctsf) from Mus musculus (Mouse).